A 99-amino-acid polypeptide reads, in one-letter code: DNA/RNA-binding protein Alba 1 (99 aa).

At Lys17 the chain carries N6-acetyllysine.

The protein belongs to the histone-like Alba family. In terms of processing, acetylated. Acetylation at Lys-17 decreases DNA-binding affinity.

Its subcellular location is the cytoplasm. It is found in the chromosome. Functionally, binds double-stranded DNA tightly but without sequence specificity. Involved in DNA compaction. The sequence is that of DNA/RNA-binding protein Alba 1 from Sulfurisphaera tokodaii (strain DSM 16993 / JCM 10545 / NBRC 100140 / 7) (Sulfolobus tokodaii).